Here is a 1203-residue protein sequence, read N- to C-terminus: Delphilin (1203 aa).

The PDZ 1 domain maps to 1-79 (MPATNQGWPE…VPPSLGVLPG (79 aa)). A lipid anchor (S-palmitoyl cysteine) is attached at Ala-3. The disordered stretch occupies residues 215 to 270 (GAQRLRRSRSEERPERLLVSTRASAAPRRPDEPPPRKATSLLGGRTGPGGPRRTVR). Residues 231–241 (LLVSTRASAAP) show a composition bias toward low complexity. The 78-residue stretch at 268–345 (TVRVYKGNKS…MPTLVVEEGP (78 aa)) folds into the PDZ 2 domain. Ser-303 is subject to Phosphoserine. Disordered regions lie at residues 466 to 541 (ESSL…TPNP), 563 to 586 (IGTM…GPRT), 611 to 656 (LASP…PPSR), and 710 to 821 (SFVT…SHMS). Positions 500 to 509 (RSQGLETSLS) are enriched in polar residues. 4 positions are modified to phosphoserine: Ser-572, Ser-613, Ser-644, and Ser-647. Residues 611–625 (LASPSSSESHPYASL) show a composition bias toward low complexity. Low complexity predominate over residues 715 to 740 (ERSSASECVSSSEEGSSLTYSSISDH). Over residues 741 to 756 (IPPPPLSPPPPPPLPF) the composition is skewed to pro residues. Over residues 774 to 784 (QSLTKPLTQIN) the composition is skewed to polar residues. Pro residues predominate over residues 786–803 (PVPPPPPPPLPPPVPCAP). An FH2 domain is found at 812 to 1203 (HRRSETSHMS…SSGMVSPLAW (392 aa)).

Interacts with C-terminus of the glutamate receptor GRID2 via PDZ domain. Isoform 2 also interacts with Profilin-2/PFN2 and with the monocarboxylate transporter SLC16A7 via PDZ domain. The interaction of isoform 2 with GRID2 is dependent on GRID2 phosphorylation by PKA. Isoform 2 is palmitoylated. Palmitoylation of isoform 2 is necessary for the enhanced cell surface expression of GRID2, and is also responsible for the accumulation of isoform 2 within dendritic spines. Isoform 1 and isoform 2 are differentially localized, probably modulating GRID2 signaling in neurons. Isoform 1 is expressed in the cerebellum, but not in the cerebral cortex. Isoform 2 is expressed in the cell body of purkinge cells of the cerebellum and weakly expressed in the cerebrum and the brainstem as well as various nuclei of the thalamus. Isoform 2 is highly expressed in the cerebral cortex than in the cerebellum. Isoform 3 is expressed in the cerebellum and cerebrum.

Its subcellular location is the postsynaptic cell membrane. The protein localises to the cell projection. The protein resides in the dendritic spine. It is found in the synapse. It localises to the cell membrane. Functionally, postsynaptic scaffolding protein at the Purkinje cell synapse, where it may serve to link GRID2 with actin cytoskeleton and various signaling molecules. This Mus musculus (Mouse) protein is Delphilin (Grid2ip).